A 280-amino-acid chain; its full sequence is Golgi phosphoprotein 3-like (280 aa).

The tract at residues 1–30 (MTTLTRRGRRADVGQENRVDSEDYIKDKDE) is disordered. A compositionally biased stretch (basic and acidic residues) spans 10–30 (RADVGQENRVDSEDYIKDKDE). Residues Trp-62, Arg-71, Arg-152, and Arg-155 each contribute to the a 1,2-diacyl-sn-glycero-3-phospho-(1D-myo-inositol 4-phosphate) site. The tract at residues 171–182 (EKQNFLLFDMTT) is beta-hairpin required for oligomerization.

It belongs to the GOLPH3/VPS74 family. Homooligomer.

It localises to the golgi apparatus. It is found in the golgi stack membrane. The protein localises to the trans-Golgi network membrane. In terms of biological role, phosphatidylinositol-4-phosphate-binding protein that may play a role in the process of vesicle budding at the Golgi and anterograde transport to the plasma membrane. The protein is Golgi phosphoprotein 3-like (golph3l) of Xenopus tropicalis (Western clawed frog).